A 155-amino-acid polypeptide reads, in one-letter code: Interleukin-2 (155 aa).

Positions Met1 to Ser20 are cleaved as a signal peptide. Thr24 carries O-linked (GalNAc...) threonine glycosylation. A disulfide bond links Cys79 and Cys127. N-linked (GlcNAc...) asparagine glycosylation is present at Asn112.

Belongs to the IL-2 family.

The protein resides in the secreted. In terms of biological role, cytokine produced by activated CD4-positive helper T-cells and to a lesser extend activated CD8-positive T-cells and natural killer (NK) cells that plays pivotal roles in the immune response and tolerance. Binds to a receptor complex composed of either the high-affinity trimeric IL-2R (IL2RA/CD25, IL2RB/CD122 and IL2RG/CD132) or the low-affinity dimeric IL-2R (IL2RB and IL2RG). Interaction with the receptor leads to oligomerization and conformation changes in the IL-2R subunits resulting in downstream signaling starting with phosphorylation of JAK1 and JAK3. In turn, JAK1 and JAK3 phosphorylate the receptor to form a docking site leading to the phosphorylation of several substrates including STAT5. This process leads to activation of several pathways including STAT, phosphoinositide-3-kinase/PI3K and mitogen-activated protein kinase/MAPK pathways. Functions as a T-cell growth factor and can increase NK-cell cytolytic activity as well. Promotes strong proliferation of activated B-cells and subsequently immunoglobulin production. Plays a pivotal role in regulating the adaptive immune system by controlling the survival and proliferation of regulatory T-cells, which are required for the maintenance of immune tolerance. Moreover, participates in the differentiation and homeostasis of effector T-cell subsets, including Th1, Th2, Th17 as well as memory CD8-positive T-cells. The polypeptide is Interleukin-2 (IL2) (Vulpes vulpes (Red fox)).